We begin with the raw amino-acid sequence, 66 residues long: Potassium channel toxin alpha-KTx 30.3 (66 aa).

Positions Met-1–Ala-24 are cleaved as a signal peptide. Disulfide bonds link Cys-30-Cys-50, Cys-36-Cys-55, and Cys-40-Cys-57.

The protein belongs to the short scorpion toxin superfamily. Potassium channel inhibitor family. Alpha-KTx 30 subfamily. Expressed by the venom gland.

It localises to the secreted. Its function is as follows. inhibits Kv1.3/KCNA3 channel. This Scorpiops jendeki (Scorpion) protein is Potassium channel toxin alpha-KTx 30.3.